Reading from the N-terminus, the 250-residue chain is Eukaryotic translation initiation factor 3 subunit K (250 aa).

The region spanning 54-235 is the PCI domain; it reads YDLFGNLAIL…DVKAGVVKEN (182 aa).

It belongs to the eIF-3 subunit K family. As to quaternary structure, component of the eukaryotic translation initiation factor 3 (eIF-3) complex.

It is found in the cytoplasm. Component of the eukaryotic translation initiation factor 3 (eIF-3) complex, which is involved in protein synthesis of a specialized repertoire of mRNAs and, together with other initiation factors, stimulates binding of mRNA and methionyl-tRNAi to the 40S ribosome. The eIF-3 complex specifically targets and initiates translation of a subset of mRNAs involved in cell proliferation. In Cryptococcus neoformans var. neoformans serotype D (strain B-3501A) (Filobasidiella neoformans), this protein is Eukaryotic translation initiation factor 3 subunit K.